Reading from the N-terminus, the 162-residue chain is Phosphopantetheine adenylyltransferase (162 aa).

Residue Thr-9 participates in substrate binding. Residues 9–10 (TF) and His-17 each bind ATP. Lys-41, Leu-73, and Arg-87 together coordinate substrate. ATP contacts are provided by residues 88–90 (GLR), Glu-98, and 123–129 (LSYISSS).

It belongs to the bacterial CoaD family. As to quaternary structure, homohexamer. Mg(2+) serves as cofactor.

It is found in the cytoplasm. It carries out the reaction (R)-4'-phosphopantetheine + ATP + H(+) = 3'-dephospho-CoA + diphosphate. It participates in cofactor biosynthesis; coenzyme A biosynthesis; CoA from (R)-pantothenate: step 4/5. Reversibly transfers an adenylyl group from ATP to 4'-phosphopantetheine, yielding dephospho-CoA (dPCoA) and pyrophosphate. In Teredinibacter turnerae (strain ATCC 39867 / T7901), this protein is Phosphopantetheine adenylyltransferase.